An 85-amino-acid chain; its full sequence is Conotoxin Mi15b (85 aa).

A signal peptide spans 1–23 (MEKLTVLILVAIVLLTIQVLGQS). Residues 24-49 (DRDKHPKRRPRQYATKRLSALMKGHR) constitute a propeptide that is removed on maturation. Gln50 is subject to Pyrrolidone carboxylic acid.

Belongs to the conotoxin O2 superfamily. Post-translationally, contains 4 disulfide bonds. Expressed by the venom duct.

The protein resides in the secreted. The chain is Conotoxin Mi15b from Conus miles (Soldier cone).